Here is a 557-residue protein sequence, read N- to C-terminus: Hydroxylamine reductase (557 aa).

Residues C4, C7, C19, and C26 each contribute to the [4Fe-4S] cluster site. Residues H253, E277, C321, C408, C436, C461, E495, and K497 each coordinate hybrid [4Fe-2O-2S] cluster. At C408 the chain carries Cysteine persulfide.

Belongs to the HCP family. Requires [4Fe-4S] cluster as cofactor. The cofactor is hybrid [4Fe-2O-2S] cluster.

It is found in the cytoplasm. The enzyme catalyses A + NH4(+) + H2O = hydroxylamine + AH2 + H(+). Its function is as follows. Catalyzes the reduction of hydroxylamine to form NH(3) and H(2)O. The chain is Hydroxylamine reductase from Acidithiobacillus ferrooxidans (strain ATCC 53993 / BNL-5-31) (Leptospirillum ferrooxidans (ATCC 53993)).